The chain runs to 32 residues: Potassium channel toxin alpha-KTx 9.4 (32 aa).

3 disulfides stabilise this stretch: Cys3/Cys19, Cys6/Cys24, and Cys10/Cys26.

In terms of tissue distribution, expressed by the venom gland.

The protein localises to the secreted. Blocker of human voltage-gated potassium channel Kv1.1/KCNA1. The protein is Potassium channel toxin alpha-KTx 9.4 of Hottentotta tamulus (Eastern Indian scorpion).